The sequence spans 316 residues: N-acetyl-gamma-glutamyl-phosphate reductase (316 aa).

The active site involves cysteine 136.

This sequence belongs to the NAGSA dehydrogenase family. Type 1 subfamily.

It is found in the cytoplasm. The enzyme catalyses N-acetyl-L-glutamate 5-semialdehyde + phosphate + NADP(+) = N-acetyl-L-glutamyl 5-phosphate + NADPH + H(+). It functions in the pathway amino-acid biosynthesis; L-arginine biosynthesis; N(2)-acetyl-L-ornithine from L-glutamate: step 3/4. Catalyzes the NADPH-dependent reduction of N-acetyl-5-glutamyl phosphate to yield N-acetyl-L-glutamate 5-semialdehyde. The chain is N-acetyl-gamma-glutamyl-phosphate reductase from Xanthomonas campestris pv. campestris (strain B100).